The chain runs to 126 residues: Small ribosomal subunit protein uS12 (126 aa).

Positions 1-28 are disordered; the sequence is MPTIQQLIRSERSKVQKKTKSPALKQCP. Aspartate 89 is modified (3-methylthioaspartic acid). The tract at residues 104–126 is disordered; that stretch reads ATGVKDRKQGRSKYGTKREKAKK. The segment covering 113–126 has biased composition (basic residues); the sequence is GRSKYGTKREKAKK.

This sequence belongs to the universal ribosomal protein uS12 family. Part of the 30S ribosomal subunit. Contacts proteins S8 and S17. May interact with IF1 in the 30S initiation complex.

Functionally, with S4 and S5 plays an important role in translational accuracy. Its function is as follows. Interacts with and stabilizes bases of the 16S rRNA that are involved in tRNA selection in the A site and with the mRNA backbone. Located at the interface of the 30S and 50S subunits, it traverses the body of the 30S subunit contacting proteins on the other side and probably holding the rRNA structure together. The combined cluster of proteins S8, S12 and S17 appears to hold together the shoulder and platform of the 30S subunit. This is Small ribosomal subunit protein uS12 from Synechocystis sp. (strain ATCC 27184 / PCC 6803 / Kazusa).